A 140-amino-acid polypeptide reads, in one-letter code: Holo-[acyl-carrier-protein] synthase (140 aa).

Residues aspartate 7 and glutamate 58 each coordinate Mg(2+).

Belongs to the P-Pant transferase superfamily. AcpS family. It depends on Mg(2+) as a cofactor.

It localises to the cytoplasm. It catalyses the reaction apo-[ACP] + CoA = holo-[ACP] + adenosine 3',5'-bisphosphate + H(+). Transfers the 4'-phosphopantetheine moiety from coenzyme A to a Ser of acyl-carrier-protein. In Chloroflexus aggregans (strain MD-66 / DSM 9485), this protein is Holo-[acyl-carrier-protein] synthase.